Here is a 398-residue protein sequence, read N- to C-terminus: tRNA-specific 2-thiouridylase MnmA (398 aa).

ATP is bound by residues Ala18–Ser25 and Leu44. The Nucleophile role is filled by Cys112. A disulfide bridge connects residues Cys112 and Cys213. Gly136 is a binding site for ATP. An interaction with tRNA region spans residues Arg163–Gln165. The Cysteine persulfide intermediate role is filled by Cys213.

The protein belongs to the MnmA/TRMU family.

It localises to the cytoplasm. The catalysed reaction is S-sulfanyl-L-cysteinyl-[protein] + uridine(34) in tRNA + AH2 + ATP = 2-thiouridine(34) in tRNA + L-cysteinyl-[protein] + A + AMP + diphosphate + H(+). Catalyzes the 2-thiolation of uridine at the wobble position (U34) of tRNA, leading to the formation of s(2)U34. This is tRNA-specific 2-thiouridylase MnmA from Sinorhizobium medicae (strain WSM419) (Ensifer medicae).